The primary structure comprises 405 residues: MSELLATYILADPGCDAEKRAEQIAIGLTVGSWTDLPLLKQEQLKKHKGRVVNVEETESELGEKQATVTIAYPEANFTNDIPAVLTTVFGKLSLDGKIKLADLEFSRSFKQSLPGPKFGVYGIRKKIGEFERPLLMSIFKGVIGRDMEDLKEQLRQQALGGVDLIKDDEILFETGSAPFEKRITEGKKVLEEAFEETGRKTLYAVNLTGRTMELKAKARKAAELGADVLLLNVFAYGLDVLQSFAEDDDIPLPIMAHPAVSGALTSSPHYGFSHSLLLGKLNRYAGADFSLFPSPYGSVALPKRDALAIYDECTKEDVFKPTFAVPSAGIHPGMVPLLMKDFGIDHIINAGGGIHGHPNGAAGGGRAFRAVIDAVLEAEPVEEKAKRSPDLKLALEKWGRVEVSV.

The active-site Proton acceptor is lysine 91. Substrate is bound by residues lysine 140, 166–169 (KDDE), histidine 257, glycine 329, and 351–352 (GG). The Mg(2+) site is built by lysine 166, aspartate 168, and glutamate 169. N6-carboxylysine is present on lysine 166.

This sequence belongs to the RuBisCO large chain family. Type IV subfamily. Homodimer. Requires Mg(2+) as cofactor.

The catalysed reaction is 5-methylsulfanyl-2,3-dioxopentyl phosphate = 2-hydroxy-5-methylsulfanyl-3-oxopent-1-enyl phosphate. Its pathway is amino-acid biosynthesis; L-methionine biosynthesis via salvage pathway; L-methionine from S-methyl-5-thio-alpha-D-ribose 1-phosphate: step 3/6. Functionally, catalyzes the enolization of 2,3-diketo-5-methylthiopentyl-1-phosphate (DK-MTP-1-P) into 2-hydroxy-3-keto-5-methylthiopentenyl-1-phosphate (HK-MTPenyl-1-P). This chain is 2,3-diketo-5-methylthiopentyl-1-phosphate enolase, found in Bacillus licheniformis (strain ATCC 14580 / DSM 13 / JCM 2505 / CCUG 7422 / NBRC 12200 / NCIMB 9375 / NCTC 10341 / NRRL NRS-1264 / Gibson 46).